The following is a 304-amino-acid chain: DDRGK domain-containing protein 1 (304 aa).

Residues 1–2 (MD) lie on the Lumenal side of the membrane. A helical membrane pass occupies residues 3–23 (LIILVGIAIALLVVIISLYLL). Topologically, residues 24-304 (QKKNSTTEAK…LTPVSAEGSS (281 aa)) are cytoplasmic. Residues 31–174 (EAKPAAAAPQ…AERLAKEERE (144 aa)) are disordered. A compositionally biased stretch (low complexity) spans 53–82 (RRAQIARNQRNRLRQNAPVAAAAPQAEAPA). Residues 105 to 174 (LDEKMGAKKR…AERLAKEERE (70 aa)) show a composition bias toward basic and acidic residues.

Belongs to the DDRGK1 family. As to quaternary structure, interacts with Atg9; the interaction is transient.

It localises to the endoplasmic reticulum membrane. Functionally, substrate adapter for ufmylation, the covalent attachment of the ubiquitin-like modifier UFM1 to substrate proteins. Required for ufmylation of Atg9; protects the nervous system during aging, possibly by stabilizing Atg9 and supporting its function. This chain is DDRGK domain-containing protein 1, found in Drosophila ananassae (Fruit fly).